The chain runs to 173 residues: Tumor necrosis factor ligand superfamily member 18 (173 aa).

Residues 1–20 (MEEMPLRESSPQRAERCKKS) lie on the Cytoplasmic side of the membrane. The chain crosses the membrane as a helical; Signal-anchor for type II membrane protein span at residues 21–41 (WLLCIVALLLMLLCSLGTLIY). Residues 40–166 (IYTSLKPTAI…TNTYWGIILM (127 aa)) enclose the THD domain. At 42–173 (TSLKPTAIES…ILMPDLPFIS (132 aa)) the chain is on the extracellular side. A disulfide bridge links Cys-52 with Cys-72. N-linked (GlcNAc...) asparagine glycosylation occurs at Asn-74.

The protein belongs to the tumor necrosis factor family. In terms of assembly, homotrimer. Homodimer. Post-translationally, N-glycosylated. As to expression, detected in immature and mature dendritic cells and in macrophages (at protein level). Detected in spleen, lung, heart, thymus, monocytes, macrophages, B-cells and dendritic cells.

Its subcellular location is the cell membrane. Its function is as follows. Cytokine that binds to TNFRSF18/AITR/GITR. Regulates T-cell responses. Can function as costimulator and lower the threshold for T-cell activation and T-cell proliferation. Important for interactions between activated T-lymphocytes and endothelial cells. Mediates activation of NF-kappa-B. Triggers increased phosphorylation of STAT1 and up-regulates expression of VCAM1 and ICAM1. Promotes leukocyte adhesion to endothelial cells. Regulates migration of monocytes from the splenic reservoir to sites of inflammation. The protein is Tumor necrosis factor ligand superfamily member 18 (Tnfsf18) of Mus musculus (Mouse).